A 130-amino-acid chain; its full sequence is Small ribosomal subunit protein uS9 (130 aa).

It belongs to the universal ribosomal protein uS9 family.

This is Small ribosomal subunit protein uS9 from Paracidovorax citrulli (strain AAC00-1) (Acidovorax citrulli).